The primary structure comprises 121 residues: Protein YxiB (121 aa).

In Bacillus subtilis (strain 168), this protein is Protein YxiB (yxiB).